The sequence spans 379 residues: Queuine tRNA-ribosyltransferase (379 aa).

The active-site Proton acceptor is Asp-94. Residues 94 to 98 (DSGGF), Asp-148, Gln-191, and Gly-218 contribute to the substrate site. The tract at residues 249 to 255 (GVGSPDS) is RNA binding. The Nucleophile role is filled by Asp-268. Positions 273 to 277 (TRIAR) are RNA binding; important for wobble base 34 recognition. Zn(2+) contacts are provided by Cys-306, Cys-308, Cys-311, and His-337.

Belongs to the queuine tRNA-ribosyltransferase family. In terms of assembly, homodimer. Within each dimer, one monomer is responsible for RNA recognition and catalysis, while the other monomer binds to the replacement base PreQ1. It depends on Zn(2+) as a cofactor.

It carries out the reaction 7-aminomethyl-7-carbaguanine + guanosine(34) in tRNA = 7-aminomethyl-7-carbaguanosine(34) in tRNA + guanine. It functions in the pathway tRNA modification; tRNA-queuosine biosynthesis. Functionally, catalyzes the base-exchange of a guanine (G) residue with the queuine precursor 7-aminomethyl-7-deazaguanine (PreQ1) at position 34 (anticodon wobble position) in tRNAs with GU(N) anticodons (tRNA-Asp, -Asn, -His and -Tyr). Catalysis occurs through a double-displacement mechanism. The nucleophile active site attacks the C1' of nucleotide 34 to detach the guanine base from the RNA, forming a covalent enzyme-RNA intermediate. The proton acceptor active site deprotonates the incoming PreQ1, allowing a nucleophilic attack on the C1' of the ribose to form the product. After dissociation, two additional enzymatic reactions on the tRNA convert PreQ1 to queuine (Q), resulting in the hypermodified nucleoside queuosine (7-(((4,5-cis-dihydroxy-2-cyclopenten-1-yl)amino)methyl)-7-deazaguanosine). The protein is Queuine tRNA-ribosyltransferase of Bacillus anthracis (strain CDC 684 / NRRL 3495).